The chain runs to 1235 residues: STE20-like serine/threonine-protein kinase (1235 aa).

The residue at position 14 (S14) is a Phosphoserine. The Protein kinase domain occupies 34 to 292; it reads WEIIGELGDG…TSQLLQHPFV (259 aa). Residues 40–48 and K63 contribute to the ATP site; that span reads LGDGAFGKV. Residue D155 is the Proton acceptor of the active site. Residue T183 is modified to Phosphothreonine. The residue at position 189 (S189) is a Phosphoserine. Residues 309-351 are disordered; it reads AEVTEEVEDGKEEDEEEETENSLPIPASKRASSDLSIASSEED. The segment covering 312-328 has biased composition (acidic residues); sequence TEEVEDGKEEDEEEETE. Phosphoserine is present on residues S330, S340, S341, S344, S347, S348, S354, and S372. Disordered regions lie at residues 363 to 393 and 421 to 441; these read VSEKTERSNSEDKLNSKILNEKPTTDEPEKA and ENEREKRPKLENLPDTEDQET. The span at 421–432 shows a compositional bias: basic and acidic residues; that stretch reads ENEREKRPKLEN. The residue at position 518 (S518) is a Phosphoserine. The tract at residues 519-539 is disordered; sequence EVGLTKEDTQEKLGEDDKTQK. Residues 522-539 are compositionally biased toward basic and acidic residues; that stretch reads LTKEDTQEKLGEDDKTQK. At S565 the chain carries Phosphoserine. At T569 the chain carries Phosphothreonine. S571, S647, S655, and S667 each carry phosphoserine. The segment at 613–760 is disordered; sequence EGKNKEQAIN…GTGSTADTSS (148 aa). The segment covering 638–650 has biased composition (acidic residues); sequence EGEEITESSSTEE. The segment covering 679–695 has biased composition (basic and acidic residues); it reads IDKEKKEIPVSIKKEPE. A compositionally biased stretch (low complexity) spans 749-760; it reads DSGTGSTADTSS. Phosphoserine is present on residues S777 and S779. A Phosphothreonine modification is found at T814. S818 is modified (phosphoserine). Positions 826-1069 form a coiled coil; the sequence is LRRQELRELR…LKNRQTQERA (244 aa). A UVR domain is found at 875 to 910; that stretch reads DQEIENLEKQQKQTIERLEQEHTNRLRDEAKRIKGE. T1097 is subject to Phosphothreonine. Residues 1109-1183 are a coiled coil; the sequence is AAQEEKRQKN…ELKEWREKLR (75 aa).

This sequence belongs to the protein kinase superfamily. STE Ser/Thr protein kinase family. STE20 subfamily. Proteolytically cleaved by caspase-3. In terms of processing, autophosphorylated. In terms of tissue distribution, ubiquitously expressed. Highest expression is found in heart and in skeletal muscle.

It localises to the cytoplasm. It catalyses the reaction L-seryl-[protein] + ATP = O-phospho-L-seryl-[protein] + ADP + H(+). It carries out the reaction L-threonyl-[protein] + ATP = O-phospho-L-threonyl-[protein] + ADP + H(+). Its function is as follows. Mediates apoptosis and actin stress fiber dissolution. In Homo sapiens (Human), this protein is STE20-like serine/threonine-protein kinase (SLK).